The sequence spans 553 residues: Arginine--tRNA ligase (553 aa).

A 'HIGH' region motif is present at residues 132 to 140; it reads PTGDLHIGH.

The protein belongs to the class-I aminoacyl-tRNA synthetase family. Monomer.

Its subcellular location is the cytoplasm. It carries out the reaction tRNA(Arg) + L-arginine + ATP = L-arginyl-tRNA(Arg) + AMP + diphosphate. The chain is Arginine--tRNA ligase from Staphylococcus aureus (strain Mu50 / ATCC 700699).